Reading from the N-terminus, the 303-residue chain is MNNILIITGPTASGKSKISMKIAQDNNGIIVNCDSKQIYREIPIITDQPNLNDTSVEHKLYGYVSVTQQYSVGLWIEDLKDEISSIIQQKKFPVITGGSGMYINSLIYGLSQIPKIEDSVRNETRRLFKTLGKKEFYALLIDKDPIAKCLHKNNSHQLLRAYEVIEQTGISIFVWKENAPREPIFKNFKLCILMPPRSEIYKKINERFINMINTSVIEEIENLLSLNIPAHFPAMKAHGVPEIIQYLQNKISIDQAIEIAQKNTRNYAKRQYTWFKHQFRNALFYESQDQLLESIKNSYVYYN.

9–16 (GPTASGKS) provides a ligand contact to ATP. Position 11 to 16 (11 to 16 (TASGKS)) interacts with substrate. Residues 34–37 (DSKQ) are interaction with substrate tRNA.

It belongs to the IPP transferase family. Monomer. Mg(2+) serves as cofactor.

The catalysed reaction is adenosine(37) in tRNA + dimethylallyl diphosphate = N(6)-dimethylallyladenosine(37) in tRNA + diphosphate. Functionally, catalyzes the transfer of a dimethylallyl group onto the adenine at position 37 in tRNAs that read codons beginning with uridine, leading to the formation of N6-(dimethylallyl)adenosine (i(6)A). The protein is tRNA dimethylallyltransferase of Ehrlichia chaffeensis (strain ATCC CRL-10679 / Arkansas).